The chain runs to 372 residues: Isoliquiritigenin 2'-O-methyltransferase (372 aa).

Positions 217, 240, 260, 261, and 274 each coordinate S-adenosyl-L-methionine. His-278 serves as the catalytic Proton acceptor.

It belongs to the class I-like SAM-binding methyltransferase superfamily. Cation-independent O-methyltransferase family. COMT subfamily. As to quaternary structure, monomer. Homodimer. In terms of tissue distribution, roots (at protein level). Expressed mainly in roots, and to a lesser extent in root nodules. In the roots, expression is not detected in the root tip or the cells immediately behind the tip, but is detected in tissues starting 1.5-2.0 mm distal to the root tip. Detected in the epidermal and cortical cells of 2 day old roots, with lower levels in vascular tissue.

It carries out the reaction isoliquiritigenin + S-adenosyl-L-methionine = 2'-O-methylisoliquiritigenin + S-adenosyl-L-homocysteine + H(+). The enzyme catalyses licodione + S-adenosyl-L-methionine = 2'-O-methyllicodione + S-adenosyl-L-homocysteine + H(+). Inhibited by 1 mM Co(2+), Cu(2+), Zn(2+) or Fe(2+). Non-competitively inhibited by S-adenosyl-L-homocysteine. Competitively inhibited by 2'-O-methylisoliquiritigenin. Methylates the 2'-hydroxyl of isoliquiritigenin and licodione. Does not methylate narigenin chalcone, caffeic acid or daidzein. Involved in the root nodulation initiation by promoting the biosynthesis of nod-inducing molecules. This chain is Isoliquiritigenin 2'-O-methyltransferase, found in Medicago sativa (Alfalfa).